Reading from the N-terminus, the 301-residue chain is Oxygen-dependent coproporphyrinogen-III oxidase (301 aa).

S94 lines the substrate pocket. The a divalent metal cation site is built by H98 and H108. The Proton donor role is filled by H108. 110–112 lines the substrate pocket; it reads NVR. A divalent metal cation-binding residues include H147 and H177. The important for dimerization stretch occupies residues 242–277; the sequence is YVEFNLVYDRGTLFGLQSGGRTESILMSMPPLARWE. 260-262 is a substrate binding site; sequence GGR.

The protein belongs to the aerobic coproporphyrinogen-III oxidase family. As to quaternary structure, homodimer. A divalent metal cation serves as cofactor.

The protein resides in the cytoplasm. The catalysed reaction is coproporphyrinogen III + O2 + 2 H(+) = protoporphyrinogen IX + 2 CO2 + 2 H2O. It functions in the pathway porphyrin-containing compound metabolism; protoporphyrin-IX biosynthesis; protoporphyrinogen-IX from coproporphyrinogen-III (O2 route): step 1/1. Functionally, involved in the heme biosynthesis. Catalyzes the aerobic oxidative decarboxylation of propionate groups of rings A and B of coproporphyrinogen-III to yield the vinyl groups in protoporphyrinogen-IX. This Photobacterium profundum (strain SS9) protein is Oxygen-dependent coproporphyrinogen-III oxidase.